A 71-amino-acid chain; its full sequence is Small ribosomal subunit protein bS21 (71 aa).

This sequence belongs to the bacterial ribosomal protein bS21 family.

This Photobacterium profundum (strain SS9) protein is Small ribosomal subunit protein bS21.